The primary structure comprises 237 residues: Phosphoserine phosphatase (237 aa).

Aspartate 30 functions as the Nucleophile in the catalytic mechanism. Mg(2+)-binding residues include aspartate 30 and aspartate 32. Aspartate 32 (proton donor) is an active-site residue. Residues glutamate 39, arginine 76, 120–121, and lysine 169 each bind substrate; that span reads SG. A Mg(2+)-binding site is contributed by aspartate 192. Position 195 (asparagine 195) interacts with substrate.

Belongs to the HAD-like hydrolase superfamily. SerB family. Mg(2+) serves as cofactor.

The enzyme catalyses O-phospho-L-serine + H2O = L-serine + phosphate. The catalysed reaction is O-phospho-D-serine + H2O = D-serine + phosphate. It functions in the pathway amino-acid biosynthesis; L-serine biosynthesis; L-serine from 3-phospho-D-glycerate: step 3/3. Catalyzes the dephosphorylation of phosphoserine (P-Ser) in vitro. Also catalyzes the dephosphorylation of phosphothreonine (P-Thr) in vitro. This is Phosphoserine phosphatase from Albidiferax ferrireducens (strain ATCC BAA-621 / DSM 15236 / T118) (Rhodoferax ferrireducens).